A 490-amino-acid polypeptide reads, in one-letter code: One cut domain family member 3 (490 aa).

Disordered stretches follow at residues 130–155 (GAHGGHPHAHPHPATAPPPPPPQRLA), 193–213 (LSPLPSALPPALHSAPQPPPP), and 287–316 (HGPHSGGGGPGGGGGAGGGSGGPGAGAAAE). Positions 143–152 (ATAPPPPPPQ) are enriched in pro residues. Over residues 290–311 (HSGGGGPGGGGGAGGGSGGPGA) the composition is skewed to gly residues. The segment at residues 309-395 (PGAGAAAEEI…QRMSALRLAA (87 aa)) is a DNA-binding region (CUT). The segment at residues 411–470 (PKKQRLVFTDLQRRTLIAIFKENKRPSKEMQATISQQLGLELNTVSNFFMNARRRCMNRW) is a DNA-binding region (homeobox).

It belongs to the CUT homeobox family. As to expression, specifically expressed in brain, stomach and gut. Within the gut, expressed only in duodenum and jejunum.

It is found in the nucleus. In terms of biological role, transcriptional activator. Binds the consensus DNA sequence 5'-DHWATTGAYTWWD-3' on a variety of gene promoters such as those of HNF3B and TTR. This chain is One cut domain family member 3 (Onecut3), found in Mus musculus (Mouse).